A 182-amino-acid polypeptide reads, in one-letter code: CDP-diacylglycerol--glycerol-3-phosphate 3-phosphatidyltransferase (182 aa).

Residues 2-12 (QFNIPTLLTLF) lie on the Cytoplasmic side of the membrane. Residues 13–37 (RVILIPFFVLVFYLPVTWSPFAAAL) traverse the membrane as a helical segment. At 38–60 (IFCVAAVTDWFDGFLARRWNQST) the chain is on the periplasmic side. The chain crosses the membrane as a helical span at residues 61 to 81 (RFGAFLDPVADKVLVAIAMVL). Residues 82–86 (VTEHY) are Cytoplasmic-facing. Residues 87–107 (HSWWVTLPAATMIAREIIISA) traverse the membrane as a helical segment. Over 108–145 (LREWMAELGKRSSVAVSWIGKVKTTAQMVALAWLLWRP) the chain is Periplasmic. The chain crosses the membrane as a helical span at residues 146-168 (NIWVEYAGIALFFVAAVLTLWSM). Over 169-181 (LQYLSAARADLLD) the chain is Cytoplasmic.

It belongs to the CDP-alcohol phosphatidyltransferase class-I family.

The protein resides in the cell inner membrane. It catalyses the reaction a CDP-1,2-diacyl-sn-glycerol + sn-glycerol 3-phosphate = a 1,2-diacyl-sn-glycero-3-phospho-(1'-sn-glycero-3'-phosphate) + CMP + H(+). It participates in phospholipid metabolism; phosphatidylglycerol biosynthesis; phosphatidylglycerol from CDP-diacylglycerol: step 1/2. In terms of biological role, catalyzes the conversion of cytidine diphosphate diacylglycerol (CDP-DG) and glycerol 3-phosphate into phosphatidylglycerol. Essential for the synthesis of anionic phospholipids, thereby playing a role in balancing the ratio of zwitterionic and anionic phospholipids, which is thought to be important for normal membrane function. This chain is CDP-diacylglycerol--glycerol-3-phosphate 3-phosphatidyltransferase, found in Shigella sonnei (strain Ss046).